The chain runs to 62 residues: Small acidic protein 1 (62 aa).

As to quaternary structure, interacts with the COP9 signalosome. In terms of tissue distribution, expressed in roots, flowers, siliques, stems, leaves and seeds. In flowers, detected in petals, anthers and pistils.

Mediates responses to the synthetic auxin 2,4-dichlorophenoxyacetic acid (2,4-D). Not involved in the response to indole-3-acetic acid (IAA). Interacts with RUB modification-related components and may regulate the cullin-ring ubiquitin E3 ligase complex (CRL) activity. The polypeptide is Small acidic protein 1 (SMAP1) (Arabidopsis thaliana (Mouse-ear cress)).